The sequence spans 265 residues: Undecaprenyl-diphosphatase (265 aa).

7 helical membrane passes run 42 to 62 (EAIPISIWLHLGTLLAAIVYF), 90 to 110 (ISFLLISTALTGIVGLPLLLF), 115 to 135 (VEISGGSATAVIGIMLIVTGI), 160 to 182 (VAQGFAAIPGISRSGITMSALLL), 195 to 215 (FLMSIPAVLVAEIGVGLMGMV), 222 to 242 (IVGLFFAFAFGLVTIDLFLKV), and 245 to 265 (KVDFSYFCIGLGVLSVLTMFL).

It belongs to the UppP family.

It localises to the cell membrane. The enzyme catalyses di-trans,octa-cis-undecaprenyl diphosphate + H2O = di-trans,octa-cis-undecaprenyl phosphate + phosphate + H(+). Its function is as follows. Catalyzes the dephosphorylation of undecaprenyl diphosphate (UPP). This is Undecaprenyl-diphosphatase from Methanococcoides burtonii (strain DSM 6242 / NBRC 107633 / OCM 468 / ACE-M).